The following is a 418-amino-acid chain: Serine/threonine transporter SstT (418 aa).

9 helical membrane passes run 16–36 (SLVS…TLIP), 45–65 (LGTL…LLLV), 83–103 (LLIL…VASF), 142–162 (ALLE…GLSL), 192–212 (PLGI…SALL), 218–238 (LIVL…LIVF), 289–309 (VSIP…ITVL), 317–337 (LGIS…TISA), and 364–384 (VAMQ…SAET).

This sequence belongs to the dicarboxylate/amino acid:cation symporter (DAACS) (TC 2.A.23) family.

Its subcellular location is the cell inner membrane. The enzyme catalyses L-serine(in) + Na(+)(in) = L-serine(out) + Na(+)(out). The catalysed reaction is L-threonine(in) + Na(+)(in) = L-threonine(out) + Na(+)(out). In terms of biological role, involved in the import of serine and threonine into the cell, with the concomitant import of sodium (symport system). This is Serine/threonine transporter SstT from Tolumonas auensis (strain DSM 9187 / NBRC 110442 / TA 4).